The sequence spans 130 residues: Histone H2A.6 (130 aa).

Gly residues predominate over residues 1–12 (MAGRGKTLGSGG). The interval 1–23 (MAGRGKTLGSGGAKKATSRSSKA) is disordered.

This sequence belongs to the histone H2A family. In terms of assembly, the nucleosome is a histone octamer containing two molecules each of H2A, H2B, H3 and H4 assembled in one H3-H4 heterotetramer and two H2A-H2B heterodimers. The octamer wraps approximately 147 bp of DNA. Interacts with VIP1. In terms of processing, not ubiquitinated. In terms of tissue distribution, low level of expression, mainly in dividing tissues: floral buds, margins of newly emerging leaves, expanding leaves and the meristematic zone of root tips. Also expressed in many non-dividing cells of the elongation zone of the root.

It is found in the nucleus. The protein localises to the chromosome. Core component of nucleosome. Nucleosomes wrap and compact DNA into chromatin, limiting DNA accessibility to the cellular machineries which require DNA as a template. Histones thereby play a central role in transcription regulation, DNA repair, DNA replication and chromosomal stability. DNA accessibility is regulated via a complex set of post-translational modifications of histones, also called histone code, and nucleosome remodeling. Required for the T-DNA integration step of plant transformation by Agrobacterium. May play an important role in illegitimate recombination. The protein is Histone H2A.6 (RAT5) of Arabidopsis thaliana (Mouse-ear cress).